Consider the following 197-residue polypeptide: Dephospho-CoA kinase (197 aa).

The 195-residue stretch at 3–197 folds into the DPCK domain; that stretch reads ILGLTGSIAM…TGCLVGQGSR (195 aa). Residue 11 to 16 participates in ATP binding; the sequence is AMGKST.

The protein belongs to the CoaE family.

The protein resides in the cytoplasm. The enzyme catalyses 3'-dephospho-CoA + ATP = ADP + CoA + H(+). It functions in the pathway cofactor biosynthesis; coenzyme A biosynthesis; CoA from (R)-pantothenate: step 5/5. In terms of biological role, catalyzes the phosphorylation of the 3'-hydroxyl group of dephosphocoenzyme A to form coenzyme A. This Zymomonas mobilis subsp. mobilis (strain ATCC 31821 / ZM4 / CP4) protein is Dephospho-CoA kinase.